Reading from the N-terminus, the 365-residue chain is Forkhead box protein H1 (365 aa).

A disordered region spans residues 1 to 29 (MGPCSGSRLGPPEAESPSQPPKRRKKRYL). The segment at residues 32–128 (DKPPYTYLAM…ALRLQNTALC (97 aa)) is a DNA-binding region (fork-head). The disordered stretch occupies residues 151–215 (GRPYRPPSPP…TPPLPSSERP (65 aa)). Residues 154–164 (YRPPSPPPPPS) show a composition bias toward pro residues. Residues 273 to 354 (LWGQLPTSYL…VSHPRDLAAP (82 aa)) are SMAD-interaction domain (SID). The Fast/FoxH1 motif 1 (FM1) signature appears at 277–281 (LPTSY). Residues 287–293 (PNVVMPL) carry the Fast/FoxH1 motif 2 (FM2) motif. The SMAD interaction motif (SIM) signature appears at 327 to 348 (LDALFQGVPPNKSIYDVWVSHP).

Interacts with the MH2 domains of SMAD2 and SMAD3. As to expression, ubiquitous.

It is found in the nucleus. Transcriptional activator. Recognizes and binds to the DNA sequence 5'-TGT[GT][GT]ATT-3'. Required for induction of the goosecoid (GSC) promoter by TGF-beta or activin signaling. Forms a transcriptionally active complex containing FOXH1/SMAD2/SMAD4 on a site on the GSC promoter called TARE (TGF-beta/activin response element). The protein is Forkhead box protein H1 (FOXH1) of Homo sapiens (Human).